The primary structure comprises 259 residues: DNA repair protein RecO (259 aa).

This sequence belongs to the RecO family.

Functionally, involved in DNA repair and RecF pathway recombination. The chain is DNA repair protein RecO from Rhizobium rhizogenes (strain K84 / ATCC BAA-868) (Agrobacterium radiobacter).